Consider the following 192-residue polypeptide: Peptidyl-tRNA hydrolase (192 aa).

Residue His-17 coordinates tRNA. His-22 serves as the catalytic Proton acceptor. 3 residues coordinate tRNA: Phe-68, Asn-70, and Asn-116.

Belongs to the PTH family. Monomer.

It is found in the cytoplasm. The enzyme catalyses an N-acyl-L-alpha-aminoacyl-tRNA + H2O = an N-acyl-L-amino acid + a tRNA + H(+). In terms of biological role, hydrolyzes ribosome-free peptidyl-tRNAs (with 1 or more amino acids incorporated), which drop off the ribosome during protein synthesis, or as a result of ribosome stalling. Its function is as follows. Catalyzes the release of premature peptidyl moieties from peptidyl-tRNA molecules trapped in stalled 50S ribosomal subunits, and thus maintains levels of free tRNAs and 50S ribosomes. In Stenotrophomonas maltophilia (strain R551-3), this protein is Peptidyl-tRNA hydrolase.